The following is a 65-amino-acid chain: Large ribosomal subunit protein bL35 (65 aa).

The protein belongs to the bacterial ribosomal protein bL35 family.

The sequence is that of Large ribosomal subunit protein bL35 from Synechococcus sp. (strain CC9311).